The sequence spans 525 residues: GMP synthase [glutamine-hydrolyzing] (525 aa).

A Glutamine amidotransferase type-1 domain is found at 9 to 207 (RILILDFGSQ…VLEISGCEAL (199 aa)). Residue C86 is the Nucleophile of the active site. Residues H181 and E183 contribute to the active site. Positions 208 to 400 (WTPANIVEDA…LGLPYDMVYR (193 aa)) constitute a GMPS ATP-PPase domain. Residue 235–241 (SGGVDSS) coordinates ATP.

Homodimer.

It carries out the reaction XMP + L-glutamine + ATP + H2O = GMP + L-glutamate + AMP + diphosphate + 2 H(+). The protein operates within purine metabolism; GMP biosynthesis; GMP from XMP (L-Gln route): step 1/1. In terms of biological role, catalyzes the synthesis of GMP from XMP. The protein is GMP synthase [glutamine-hydrolyzing] of Ectopseudomonas mendocina (strain ymp) (Pseudomonas mendocina).